We begin with the raw amino-acid sequence, 788 residues long: IQ motif and ubiquitin-like domain-containing protein (788 aa).

The segment at 1–89 (MSDPEEERVA…SLGSASGSQD (89 aa)) is disordered. Over residues 7 to 20 (ERVADSTAHYEEAG) the composition is skewed to basic and acidic residues. Positions 31-54 (EAEGSDVMPEQDDEVQELTTESEE) are enriched in acidic residues. The segment covering 68-78 (KSDDSKPREEV) has biased composition (basic and acidic residues). A compositionally biased stretch (polar residues) spans 80 to 89 (SLGSASGSQD). One can recognise a Ubiquitin-like domain in the interval 127 to 203 (ATVKIVLIPA…VQVEVFSTLP (77 aa)). Positions 334–363 (RLHAVIVIQTSYRRWHAKRYVESLRKQKKL) constitute an IQ domain.

As to quaternary structure, component of the axonemal radial spoke 1 (RS1) complex, at least composed of spoke head proteins RSPH1, RSPH3B, RSPH9 and the cilia-specific component RSPH4A or sperm-specific component RSPH6A, spoke stalk proteins RSPH14, DNAJB13, DYDC1, ROPN1L and NME5, and the anchor protein IQUB. Does not appear to be part of radial spoke complexes 2 or 3 (RS2 or RS3). Interacts with CALM1. Interacts with DNAJB13. Interacts with DYNLL2. Interacts with NME5. Interacts with RSPH3. Interacts with RSPH9. Interacts with ZMYND10. Interacts with calmodulin; the interaction occurs in conditions of low but not high calcium. As to expression, expressed in the flagellum of sperm cells and cilia of tracheal epithelial cells (at protein level). High expression in testis, also present in brain and lung.

It localises to the cytoplasm. It is found in the cytoskeleton. The protein localises to the flagellum axoneme. Its subcellular location is the cell projection. The protein resides in the cilium. Its function is as follows. Anchors the radial spoke 1 (RS1) complex to the A microtubule of outer doublet microtubules in axonemes. The triple radial spokes (RS1, RS2 and RS3) are required to modulate beating of the sperm flagellum. May play a role in inhibiting signaling via MAPK1/ERK2 and MAPK3/ERK1. Additionally, may play a role in the functioning of cilia. Not required for the functioning of tracheal or ependymal cilia. The polypeptide is IQ motif and ubiquitin-like domain-containing protein (Iqub) (Mus musculus (Mouse)).